The chain runs to 172 residues: Ribosome maturation factor RimM (172 aa).

Positions glutamate 96–leucine 168 constitute a PRC barrel domain.

It belongs to the RimM family. Binds ribosomal protein uS19.

The protein localises to the cytoplasm. In terms of biological role, an accessory protein needed during the final step in the assembly of 30S ribosomal subunit, possibly for assembly of the head region. Essential for efficient processing of 16S rRNA. May be needed both before and after RbfA during the maturation of 16S rRNA. It has affinity for free ribosomal 30S subunits but not for 70S ribosomes. The chain is Ribosome maturation factor RimM from Streptococcus pyogenes serotype M18 (strain MGAS8232).